The following is a 212-amino-acid chain: Octanoyltransferase (212 aa).

The BPL/LPL catalytic domain occupies 31 to 209 (AETQDEIWLV…HFANLLGYNI (179 aa)). Residues 70 to 77 (RGGQITYH), 138 to 140 (SLG), and 151 to 153 (GLA) each bind substrate. Residue C169 is the Acyl-thioester intermediate of the active site.

Belongs to the LipB family.

It is found in the cytoplasm. The catalysed reaction is octanoyl-[ACP] + L-lysyl-[protein] = N(6)-octanoyl-L-lysyl-[protein] + holo-[ACP] + H(+). The protein operates within protein modification; protein lipoylation via endogenous pathway; protein N(6)-(lipoyl)lysine from octanoyl-[acyl-carrier-protein]: step 1/2. In terms of biological role, catalyzes the transfer of endogenously produced octanoic acid from octanoyl-acyl-carrier-protein onto the lipoyl domains of lipoate-dependent enzymes. Lipoyl-ACP can also act as a substrate although octanoyl-ACP is likely to be the physiological substrate. This is Octanoyltransferase from Haemophilus influenzae (strain ATCC 51907 / DSM 11121 / KW20 / Rd).